A 392-amino-acid chain; its full sequence is S-adenosylmethionine synthase (392 aa).

His20 provides a ligand contact to ATP. Asp22 is a binding site for Mg(2+). Residue Glu48 coordinates K(+). The L-methionine site is built by Glu61 and Gln106. Residues 106–116 (QSQDIINAIKK) form a flexible loop region. ATP-binding positions include 171 to 173 (DSK), Asp248, 254 to 255 (RK), Ala271, and Lys275. Asp248 lines the L-methionine pocket. Residue Lys279 participates in L-methionine binding.

Belongs to the AdoMet synthase family. As to quaternary structure, homotetramer; dimer of dimers. It depends on Mg(2+) as a cofactor. K(+) is required as a cofactor.

It is found in the cytoplasm. The enzyme catalyses L-methionine + ATP + H2O = S-adenosyl-L-methionine + phosphate + diphosphate. It participates in amino-acid biosynthesis; S-adenosyl-L-methionine biosynthesis; S-adenosyl-L-methionine from L-methionine: step 1/1. In terms of biological role, catalyzes the formation of S-adenosylmethionine (AdoMet) from methionine and ATP. The overall synthetic reaction is composed of two sequential steps, AdoMet formation and the subsequent tripolyphosphate hydrolysis which occurs prior to release of AdoMet from the enzyme. The chain is S-adenosylmethionine synthase from Borrelia garinii subsp. bavariensis (strain ATCC BAA-2496 / DSM 23469 / PBi) (Borreliella bavariensis).